The primary structure comprises 46 residues: DNA-directed RNA polymerase subunit Rpo12 (46 aa).

Zn(2+)-binding residues include Cys-9, Cys-24, and Cys-27.

The protein belongs to the archaeal Rpo12/eukaryotic RPC10 RNA polymerase subunit family. In terms of assembly, part of the RNA polymerase complex. Interacts with Rpo3. Forms an Rpo3-Rpo10-Rpo11-Rpo12 complex upon coexpression. The cofactor is Zn(2+).

The protein localises to the cytoplasm. It catalyses the reaction RNA(n) + a ribonucleoside 5'-triphosphate = RNA(n+1) + diphosphate. DNA-dependent RNA polymerase (RNAP) catalyzes the transcription of DNA into RNA using the four ribonucleoside triphosphates as substrates. In Methanocaldococcus jannaschii (strain ATCC 43067 / DSM 2661 / JAL-1 / JCM 10045 / NBRC 100440) (Methanococcus jannaschii), this protein is DNA-directed RNA polymerase subunit Rpo12.